The chain runs to 340 residues: Armadillo repeat-containing protein 12 (340 aa).

Positions 1 to 101 (MGKTIPRFLE…NITRCVYLLE (101 aa)) are interaction with TBC1D15. ARM repeat units follow at residues 100–139 (LEAEASSCTMDDIDLVADMLDEKDNSVKIQALNALKAFSG), 179–218 (LPDYVHPQLRRVMPALMEIIQSDCILAQVQAVRLLSYLAQ), and 278–318 (SLHE…SLQC). Residues 321-340 (DLGSRPSSCRPSHSCFKTGK) form a disordered region. Positions 324 to 340 (SRPSSCRPSHSCFKTGK) are enriched in low complexity.

As to quaternary structure, interacts with TBC1D15, TBC1D21, GK2 and IMMT. Interacts with VDAC2 and VDAC3 in a TBC1D21-dependent manner. Interacts (via ARM domains) with RBBP4. In terms of tissue distribution, testis-specific.

It localises to the nucleus. It is found in the mitochondrion outer membrane. Essential for male fertility and sperm mitochondrial sheath formation. Required for proper mitochondrial elongation and coiling along the flagellum during the formation of the mitochondrial sheath. Facilitates the growth and aggressiveness of neuroblastoma cells. Increases the EZH2 activity and H3K27me3 levels in a RBBP4-dependent manner, and facilitates the enrichment of polycomb repressive complex 2 and H3K27me3 on gene promoters, resulting in transcriptional repression of tumor suppressors affecting the proliferation, invasion, and metastasis of tumor cells. The polypeptide is Armadillo repeat-containing protein 12 (Armc12) (Mus musculus (Mouse)).